A 433-amino-acid polypeptide reads, in one-letter code: MAIDGSGVATPAPSGITVIIVGLGPTGLAAAIECHRRGHKVICFEKNPKSYRLGDLISVTGNAVRVLQEWGNGSVIKELQAFQCNLDTLEVYNETGDLKLSAPYNATQAKDEYMLRRSRLLDIFLQHLKSLGVEIHLGIQVADYWETESSAGVTVGGEKIVGDCVVVADGVHSKGRPQVSGEPFALEATDGIAFRAFFNASEISQDPEASWILRDAGEKDCFKTFYGKGLVMMVGTAENHEYVFWSCGHKENVMAHPSSVATVLDLIRDWPVSTRLAPLISKTPGDNCLNQTLYTRPPLKKWVSSNGRMIVLGDAAHPFLPHAGQGANQGIEDGAVLALCLEITSKKDVPLALRVTEKLRYQRVAAIQQRGVEARDQSLNVDWGNGGFSKKLTLHPAWLHDHDCIKQVYEEFDKAADAVTKGHEHTFGGIPVG.

Glu-45 and Arg-117 together coordinate FAD. Arg-195 is an active-site residue. Positions 314 and 327 each coordinate FAD.

This sequence belongs to the paxM FAD-dependent monooxygenase family. It depends on FAD as a cofactor.

It participates in alkaloid biosynthesis. In terms of biological role, FAD-dependent monooxygenase; part of the gene cluster that mediates the biosynthesis of notoamide, a fungal indole alkaloid that belongs to a family of natural products containing a characteristic bicyclo[2.2.2]diazaoctane core. The first step of notoamide biosynthesis involves coupling of L-proline and L-tryptophan by the bimodular NRPS notE, to produce cyclo-L-tryptophan-L-proline called brevianamide F. The reverse prenyltransferase notF then acts as a deoxybrevianamide E synthase and converts brevianamide F to deoxybrevianamide E via reverse prenylation at C-2 of the indole ring leading to the bicyclo[2.2.2]diazaoctane core. Deoxybrevianamide E is further hydroxylated at C-6 of the indole ring, likely catalyzed by the cytochrome P450 monooxygenase notG, to yield 6-hydroxy-deoxybrevianamide E. 6-hydroxy-deoxybrevianamide E is a specific substrate of the prenyltransferase notC for normal prenylation at C-7 to produce 6-hydroxy-7-prenyl-deoxybrevianamide, also called notoamide S. As the proposed pivotal branching point in notoamide biosynthesis, notoamide S can be diverted to notoamide E through an oxidative pyran ring closure putatively catalyzed by either notH cytochrome P450 monooxygenase or the notD FAD-linked oxidoreductase. This step would be followed by an indole 2,3-epoxidation-initiated pinacol-like rearrangement catalyzed by the notB FAD-dependent monooxygenase leading to the formation of notoamide C and notoamide D. On the other hand notoamide S is converted to notoamide T by notH (or notD), a bifunctional oxidase that also functions as the intramolecular Diels-Alderase responsible for generation of (+)-notoamide T. To generate antipodal (-)-notoaminide T, notH' (or notD') in Aspergillus versicolor is expected to catalyze a Diels-Alder reaction leading to the opposite stereochemistry. The remaining oxidoreductase notD (or notH) likely catalyzes the oxidative pyran ring formation to yield (+)-stephacidin A. The FAD-dependent monooxygenase notI is highly similar to notB and is predicted to catalyze a similar conversion from (+)-stephacidin A to (-)-notoamide B via the 2,3-epoxidation of (+)-stephacidin A followed by a pinacol-type rearrangement. Finally, it remains unclear which enzyme could be responsible for the final hydroxylation steps leading to notoamide A and sclerotiamide. In Aspergillus sp. (strain MF297-2), this protein is FAD-dependent monooxygenase notI.